Consider the following 203-residue polypeptide: Endo-type membrane-bound lytic murein transglycosylase A (203 aa).

The first 15 residues, 1-15 (MKLRWFAFLIVLLAG), serve as a signal peptide directing secretion. C16 carries the N-palmitoyl cysteine lipid modification. C16 is lipidated: S-diacylglycerol cysteine.

It belongs to the transglycosylase Slt family.

Its subcellular location is the cell outer membrane. The enzyme catalyses Endolytic cleavage of the (1-&gt;4)-beta-glycosidic linkage between N-acetylmuramic acid (MurNAc) and N-acetylglucosamine (GlcNAc) residues in peptidoglycan with concomitant formation of a 1,6-anhydrobond in the MurNAc residue.. Its function is as follows. Murein-degrading enzyme. May play a role in recycling of muropeptides during cell elongation and/or cell division. Preferentially cleaves at a distance of more than two disaccharide units from the ends of the glycan chain. The chain is Endo-type membrane-bound lytic murein transglycosylase A from Shigella boydii serotype 4 (strain Sb227).